A 956-amino-acid polypeptide reads, in one-letter code: Ubiquitin carboxyl-terminal hydrolase CYLD (956 aa).

The interval C106–G593 is interaction with TRIP. CAP-Gly domains lie at L153–A198 and D253–C286. Positions S309–E353 are disordered. The segment covering G330–R349 has biased composition (polar residues). Position 387 is a phosphoserine (S387). Residues S392 to S411 form a disordered region. Residues D394–G469 form an interaction with TRAF2 region. Phosphoserine is present on residues S418 and S422. Residues L470–E684 are interaction with IKBKG/NEMO. One can recognise a CAP-Gly 3 domain in the interval G492–K535. A USP domain is found at K592 to P950. C601 acts as the Nucleophile in catalysis. Residues L781–H833 are B-box. Residues C788, C791, C799, C802, C817, C820, H825, and H833 each coordinate Zn(2+). Catalysis depends on H871, which acts as the Proton acceptor.

The protein belongs to the peptidase C19 family. In terms of assembly, interacts (via CAP-Gly domain) with IKBKG/NEMO (via proline-rich C-terminal region). Interacts with TRAF2 and TRIP. Interacts with PLK1, DVL1, DVL3, MAVS, TBK1, IKKE and RIGI. Interacts (via CAP-Gly domain) with microtubules. Interacts with HDAC6 and BCL3. Interacts with MAP3K7. Identified in a complex with TRAF6 and SQSTM1. Interacts with OPTN and SQSTM1. Interacts with CEP350. Interacts with RNF31; the interaction is indirect and is mediated via SPATA2. Interacts with SPATA2 (via the PUB domain); the interaction is direct and recruits CYLD to the LUBAC complex, thereby regulating TNF-alpha-induced necroptosis. Post-translationally, phosphorylated on several serine residues by IKKA and/or IKKB in response to immune stimuli. Phosphorylation requires IKBKG. Phosphorylation abolishes TRAF2 deubiquitination, interferes with the activation of Jun kinases, and strongly reduces CD40-dependent gene activation by NF-kappa-B. In terms of processing, ubiquitinated. Polyubiquitinated in hepatocytes treated with palmitic acid. Ubiquitination is mediated by E3 ligase TRIM47 and leads to proteasomal degradation.

Its subcellular location is the cytoplasm. It is found in the perinuclear region. The protein resides in the cytoskeleton. It localises to the cell membrane. The protein localises to the microtubule organizing center. Its subcellular location is the centrosome. It is found in the spindle. The protein resides in the cilium basal body. It catalyses the reaction Thiol-dependent hydrolysis of ester, thioester, amide, peptide and isopeptide bonds formed by the C-terminal Gly of ubiquitin (a 76-residue protein attached to proteins as an intracellular targeting signal).. Functionally, deubiquitinase that specifically cleaves 'Lys-63'- and linear 'Met-1'-linked polyubiquitin chains and is involved in NF-kappa-B activation and TNF-alpha-induced necroptosis. Negatively regulates NF-kappa-B activation by deubiquitinating upstream signaling factors. Contributes to the regulation of cell survival, proliferation and differentiation via its effects on NF-kappa-B activation. Negative regulator of Wnt signaling. Inhibits HDAC6 and thereby promotes acetylation of alpha-tubulin and stabilization of microtubules. Plays a role in the regulation of microtubule dynamics, and thereby contributes to the regulation of cell proliferation, cell polarization, cell migration, and angiogenesis. Required for normal cell cycle progress and normal cytokinesis. Inhibits nuclear translocation of NF-kappa-B. Plays a role in the regulation of inflammation and the innate immune response, via its effects on NF-kappa-B activation. Dispensable for the maturation of intrathymic natural killer cells, but required for the continued survival of immature natural killer cells. Negatively regulates TNFRSF11A signaling and osteoclastogenesis. Involved in the regulation of ciliogenesis, allowing ciliary basal bodies to migrate and dock to the plasma membrane; this process does not depend on NF-kappa-B activation. Ability to remove linear ('Met-1'-linked) polyubiquitin chains regulates innate immunity and TNF-alpha-induced necroptosis: recruited to the LUBAC complex via interaction with SPATA2 and restricts linear polyubiquitin formation on target proteins. Regulates innate immunity by restricting linear polyubiquitin formation on RIPK2 in response to NOD2 stimulation. Involved in TNF-alpha-induced necroptosis by removing linear ('Met-1'-linked) polyubiquitin chains from RIPK1, thereby regulating the kinase activity of RIPK1. Negatively regulates intestinal inflammation by removing 'Lys-63' linked polyubiquitin chain of NLRP6, thereby reducing the interaction between NLRP6 and PYCARD/ASC and formation of the NLRP6 inflammasome. Does not catalyze deubiquitination of heterotypic 'Lys-63'-/'Lys-48'-linked branched ubiquitin chains. Removes 'Lys-63' linked polyubiquitin chain of MAP3K7, which inhibits phosphorylation and blocks downstream activation of the JNK-p38 kinase cascades. Also removes 'Lys-63'-linked polyubiquitin chains of MAP3K1 and MA3P3K3, which inhibit their interaction with MAP2K1 and MAP2K2. This chain is Ubiquitin carboxyl-terminal hydrolase CYLD (CYLD), found in Pongo abelii (Sumatran orangutan).